The following is a 364-amino-acid chain: Protein FAM81A (364 aa).

A coiled-coil region spans residues Ile-80–Ile-107. Basic and acidic residues predominate over residues Ala-275–His-300. Positions Ala-275–Gly-301 are disordered.

Belongs to the FAM81 family. In terms of assembly, interacts with DLG4/PSD-95, GRIN2B/GLUN2B and SYNGAP1; the interactions facilitate condensate formation. As to expression, highly expressed in brain (at protein level).

It localises to the postsynaptic density. The protein resides in the cytoplasm. Facilitates the interaction and assembly of proteins within the postsynaptic density by promoting the condensation of postsynaptic proteins via liquid-liquid phase separation. Required for neuronal activity. Accumulation at the postsynaptic density results in enlargement of dendritic spines. This is Protein FAM81A from Rattus norvegicus (Rat).